The sequence spans 163 residues: NADH-quinone oxidoreductase subunit I (163 aa).

4Fe-4S ferredoxin-type domains lie at 53 to 83 (LRRYPNGEERCIACKLCEAICPAQAITIEAG) and 94 to 123 (VRYDIDMVKCIYCGFCQEACPVDAIVEGPN). 8 residues coordinate [4Fe-4S] cluster: Cys63, Cys66, Cys69, Cys73, Cys103, Cys106, Cys109, and Cys113.

It belongs to the complex I 23 kDa subunit family. In terms of assembly, NDH-1 is composed of 14 different subunits. Subunits NuoA, H, J, K, L, M, N constitute the membrane sector of the complex. Requires [4Fe-4S] cluster as cofactor.

It is found in the cell inner membrane. The enzyme catalyses a quinone + NADH + 5 H(+)(in) = a quinol + NAD(+) + 4 H(+)(out). Its function is as follows. NDH-1 shuttles electrons from NADH, via FMN and iron-sulfur (Fe-S) centers, to quinones in the respiratory chain. The immediate electron acceptor for the enzyme in this species is believed to be ubiquinone. Couples the redox reaction to proton translocation (for every two electrons transferred, four hydrogen ions are translocated across the cytoplasmic membrane), and thus conserves the redox energy in a proton gradient. This is NADH-quinone oxidoreductase subunit I from Brucella anthropi (strain ATCC 49188 / DSM 6882 / CCUG 24695 / JCM 21032 / LMG 3331 / NBRC 15819 / NCTC 12168 / Alc 37) (Ochrobactrum anthropi).